Consider the following 706-residue polypeptide: ATP-dependent zinc metalloprotease FtsH (706 aa).

Residues 1–17 (MAKNSLKPSNPYNSEPE) show a composition bias toward polar residues. The interval 1–20 (MAKNSLKPSNPYNSEPETPQ) is disordered. The Cytoplasmic segment spans residues 1–24 (MAKNSLKPSNPYNSEPETPQPRPK). A helical membrane pass occupies residues 25–45 (LPMIYYVVVIALLIGLQLAFF). The Periplasmic portion of the chain corresponds to 46-142 (WSGSSREIPY…RYEGSPGTTW (97 aa)). The tract at residues 88 to 111 (GLPKQEEGNDTTRKLLPGAKTPEN) is disordered. Positions 91-100 (KQEEGNDTTR) are enriched in basic and acidic residues. A helical membrane pass occupies residues 143–163 (ISELIQWVLPFALLFGLYFFI). The Cytoplasmic segment spans residues 164–706 (FRRMGAGGPG…LRQSRNVSDN (543 aa)). An ATP-binding site is contributed by 239 to 246 (GPPGTGKT). His462 is a binding site for Zn(2+). The active site involves Glu463. Residues His466 and Asp539 each coordinate Zn(2+). The tract at residues 641–681 (RPGGQEEDSGEVDCSKKSAENGMVAHEPETTADAESTEKVG) is disordered.

It in the central section; belongs to the AAA ATPase family. The protein in the C-terminal section; belongs to the peptidase M41 family. In terms of assembly, homohexamer. Zn(2+) serves as cofactor.

The protein resides in the cell inner membrane. In terms of biological role, acts as a processive, ATP-dependent zinc metallopeptidase for both cytoplasmic and membrane proteins. Plays a role in the quality control of integral membrane proteins. The chain is ATP-dependent zinc metalloprotease FtsH from Chlorobium luteolum (strain DSM 273 / BCRC 81028 / 2530) (Pelodictyon luteolum).